Here is a 283-residue protein sequence, read N- to C-terminus: GDP-polyphosphate phosphotransferase (283 aa).

It belongs to the polyphosphate kinase 2 (PPK2) family. Class I subfamily.

It carries out the reaction [phosphate](n) + GTP = [phosphate](n+1) + GDP. Uses inorganic polyphosphate (polyP) as a donor to convert GDP to GTP. The sequence is that of GDP-polyphosphate phosphotransferase from Mycolicibacterium smegmatis (strain ATCC 700084 / mc(2)155) (Mycobacterium smegmatis).